The primary structure comprises 110 residues: Protein RnfH (110 aa).

Residues 86-110 (RKRAAQQAKDQEEKKKAEKSANKEN) are disordered. Positions 94–110 (KDQEEKKKAEKSANKEN) are enriched in basic and acidic residues.

It belongs to the UPF0125 (RnfH) family.

This Mannheimia succiniciproducens (strain KCTC 0769BP / MBEL55E) protein is Protein RnfH.